A 64-amino-acid chain; its full sequence is Large ribosomal subunit protein bL35 (64 aa).

2 stretches are compositionally biased toward basic residues: residues 1-26 and 33-44; these read MPKM…KRSK and LTKKSPKRKRKL. A disordered region spans residues 1 to 44; the sequence is MPKMKTHRGAAKRFKKTGTGKIKRSKAYTSHILTKKSPKRKRKL.

Belongs to the bacterial ribosomal protein bL35 family.

This chain is Large ribosomal subunit protein bL35, found in Alkaliphilus oremlandii (strain OhILAs) (Clostridium oremlandii (strain OhILAs)).